Reading from the N-terminus, the 460-residue chain is tRNA modification GTPase MnmE (460 aa).

(6S)-5-formyl-5,6,7,8-tetrahydrofolate is bound by residues Arg-29, Glu-86, and Lys-126. A TrmE-type G domain is found at 222–383 (GMRVVIAGRP…LAEHLKECMG (162 aa)). Asn-232 provides a ligand contact to K(+). Residues 232–237 (NAGKSS), 251–257 (TAIAGTT), 276–279 (DTAG), and 341–344 (NKAD) each bind GTP. Position 236 (Ser-236) interacts with Mg(2+). The K(+) site is built by Thr-251, Ile-253, and Thr-256. Thr-257 is a binding site for Mg(2+). Residue Lys-460 participates in (6S)-5-formyl-5,6,7,8-tetrahydrofolate binding.

This sequence belongs to the TRAFAC class TrmE-Era-EngA-EngB-Septin-like GTPase superfamily. TrmE GTPase family. In terms of assembly, homodimer. Heterotetramer of two MnmE and two MnmG subunits. It depends on K(+) as a cofactor.

It is found in the cytoplasm. In terms of biological role, exhibits a very high intrinsic GTPase hydrolysis rate. Involved in the addition of a carboxymethylaminomethyl (cmnm) group at the wobble position (U34) of certain tRNAs, forming tRNA-cmnm(5)s(2)U34. The polypeptide is tRNA modification GTPase MnmE (Pseudoalteromonas atlantica (strain T6c / ATCC BAA-1087)).